The sequence spans 445 residues: Glutamate-1-semialdehyde 2,1-aminomutase (445 aa).

Lys264 bears the N6-(pyridoxal phosphate)lysine mark.

It belongs to the class-III pyridoxal-phosphate-dependent aminotransferase family. HemL subfamily. It depends on pyridoxal 5'-phosphate as a cofactor.

The protein localises to the cytoplasm. It catalyses the reaction (S)-4-amino-5-oxopentanoate = 5-aminolevulinate. It functions in the pathway porphyrin-containing compound metabolism; protoporphyrin-IX biosynthesis; 5-aminolevulinate from L-glutamyl-tRNA(Glu): step 2/2. This Halobacterium salinarum (strain ATCC 29341 / DSM 671 / R1) protein is Glutamate-1-semialdehyde 2,1-aminomutase.